Here is a 429-residue protein sequence, read N- to C-terminus: MSDSKEDIRNGQEEDDLFSENEDNHTSQQDELINGHIENDSETAVSDDGLFSNTEEATEAPEADVPVKKVLEVAVPNFKSPASASNDVFHAHIPNFLSVEQTPYDPEQYAAEAEADAALLEHDAHWGQRIKHKVDNTVRWRLGPSGSYQSNAQIVQWSDGSYSLRIGNDIYDTQNKLISQPTFVTASHEAQHLLRVQTSFKSSFTFLPSAINTATRSKLPSMRLTTVQVPSRSVQEIIIEKDPELLKRQAEKYEEERSRARRRLEKRKQLNNYQNGTGEEEEDYSSFYGPRSTYSEQNEIIDSDRMDRLKRIKQEGAGQYRGYNKDLEENEEDDLGDFIAEEEEEEEQEEEQEEDEEDEEEVGAGSDIKGFDADKEASVARATINKYEDDEVIPSAVETDRSETVTETSVGDGSVQRRVKRRIVESDSE.

The segment covering 1 to 12 (MSDSKEDIRNGQ) has biased composition (basic and acidic residues). 3 disordered regions span residues 1 to 63 (MSDS…APEA), 257 to 306 (RSRA…SDRM), and 320 to 429 (YRGY…SDSE). Residues 328–362 (EENEEDDLGDFIAEEEEEEEQEEEQEEDEEDEEEV) are compositionally biased toward acidic residues. A compositionally biased stretch (basic and acidic residues) spans 369–378 (KGFDADKEAS).

This sequence belongs to the LEO1 family.

It is found in the nucleus. This is an uncharacterized protein from Schizosaccharomyces pombe (strain 972 / ATCC 24843) (Fission yeast).